Here is a 1118-residue protein sequence, read N- to C-terminus: Protein translocase subunit SecA (1118 aa).

ATP-binding positions include Q176, 194-198 (GEGKT), and D693. A disordered region spans residues 1034–1056 (QQPVQQPKYRETKDEAGSAFGGG).

The protein belongs to the SecA family. Monomer and homodimer. Part of the essential Sec protein translocation apparatus which comprises SecA, SecYEG and auxiliary proteins SecDF. Other proteins may also be involved.

Its subcellular location is the cell inner membrane. It localises to the cytoplasm. It carries out the reaction ATP + H2O + cellular proteinSide 1 = ADP + phosphate + cellular proteinSide 2.. In terms of biological role, part of the Sec protein translocase complex. Interacts with the SecYEG preprotein conducting channel. Has a central role in coupling the hydrolysis of ATP to the transfer of proteins into and across the cell membrane, serving as an ATP-driven molecular motor driving the stepwise translocation of polypeptide chains across the membrane. This Cytophaga hutchinsonii (strain ATCC 33406 / DSM 1761 / CIP 103989 / NBRC 15051 / NCIMB 9469 / D465) protein is Protein translocase subunit SecA.